The following is a 428-amino-acid chain: Phosphomethylpyrimidine synthase (428 aa).

Substrate is bound by residues N66, M94, Y123, H162, 184 to 186, 225 to 228, and E264; these read SRG and DALR. Residue H268 coordinates Zn(2+). Residue Y291 coordinates substrate. Residue H332 participates in Zn(2+) binding. Positions 408, 411, and 415 each coordinate [4Fe-4S] cluster.

This sequence belongs to the ThiC family. [4Fe-4S] cluster serves as cofactor.

The enzyme catalyses 5-amino-1-(5-phospho-beta-D-ribosyl)imidazole + S-adenosyl-L-methionine = 4-amino-2-methyl-5-(phosphooxymethyl)pyrimidine + CO + 5'-deoxyadenosine + formate + L-methionine + 3 H(+). It participates in cofactor biosynthesis; thiamine diphosphate biosynthesis. Functionally, catalyzes the synthesis of the hydroxymethylpyrimidine phosphate (HMP-P) moiety of thiamine from aminoimidazole ribotide (AIR) in a radical S-adenosyl-L-methionine (SAM)-dependent reaction. This chain is Phosphomethylpyrimidine synthase, found in Sulfolobus acidocaldarius (strain ATCC 33909 / DSM 639 / JCM 8929 / NBRC 15157 / NCIMB 11770).